We begin with the raw amino-acid sequence, 460 residues long: Cysteine--tRNA ligase (460 aa).

C28 lines the Zn(2+) pocket. Positions 30 to 40 (MTVYDYCHLGH) match the 'HIGH' region motif. The Zn(2+) site is built by C209, H234, and E238. Residues 266–270 (KMSKS) carry the 'KMSKS' region motif. An ATP-binding site is contributed by K269.

Belongs to the class-I aminoacyl-tRNA synthetase family. Monomer. Requires Zn(2+) as cofactor.

It localises to the cytoplasm. It catalyses the reaction tRNA(Cys) + L-cysteine + ATP = L-cysteinyl-tRNA(Cys) + AMP + diphosphate. The protein is Cysteine--tRNA ligase of Pseudomonas fluorescens (strain Pf0-1).